The following is a 372-amino-acid chain: Putative 26S proteasome regulatory subunit homolog MTH_1011 (372 aa).

164-171 (GSPGTGKT) serves as a coordination point for ATP.

This sequence belongs to the AAA ATPase family.

Functionally, the 26S proteasome is involved in the ATP-dependent degradation of ubiquitinated proteins. The regulatory (or ATPase) complex confers ATP dependency and substrate specificity to the 26S complex. The protein is Putative 26S proteasome regulatory subunit homolog MTH_1011 of Methanothermobacter thermautotrophicus (strain ATCC 29096 / DSM 1053 / JCM 10044 / NBRC 100330 / Delta H) (Methanobacterium thermoautotrophicum).